We begin with the raw amino-acid sequence, 142 residues long: Succinate dehydrogenase subunit 6, mitochondrial (142 aa).

At glycine 2 the chain carries N-acetylglycine.

In terms of assembly, component of complex II composed of eight subunits in plants: four classical SDH subunits SDH1, SDH2, SDH3 and SDH4 (a flavoprotein (FP), an iron-sulfur protein (IP), and a cytochrome b composed of a large and a small subunit.), as well as four subunits unknown in mitochondria from bacteria and heterotrophic eukaryotes.

The protein resides in the mitochondrion inner membrane. Its pathway is carbohydrate metabolism; tricarboxylic acid cycle. This is Succinate dehydrogenase subunit 6, mitochondrial from Arabidopsis thaliana (Mouse-ear cress).